The primary structure comprises 296 residues: Guided entry of tail-anchored proteins factor CAMLG (296 aa).

The disordered stretch occupies residues 1–79 (MESMAVATDG…SDKLNSLSVP (79 aa)). Residues 1-189 (MESMAVATDG…NTTEEFDSFR (189 aa)) lie on the Cytoplasmic side of the membrane. Serine 55 is modified (phosphoserine). Over residues 61–72 (SQTKSKQQDSDK) the composition is skewed to basic and acidic residues. A helical membrane pass occupies residues 190-207 (IFRLVGCALLALGVRAFV). Topologically, residues 208–212 (CKYLS) are lumenal. Cysteine 208 and cysteine 284 are joined by a disulfide. A helical membrane pass occupies residues 213 to 231 (IFAPFLTLQLAYMGLYKYF). At 232–269 (PKSEKKIKTTVLTAALLLSGIPAEVINRSMDTYSKMGE) the chain is on the cytoplasmic side. The helical transmembrane segment at 270 to 288 (VFTDLCVYFFTFIFCHELL) threads the bilayer. At 289 to 296 (DYWGSEVP) the chain is on the lumenal side.

As to quaternary structure, component of the Golgi to ER traffic (GET) complex, which is composed of GET1/WRB, CAMLG/GET2 and GET3/TRC40. Within the complex, GET1 and CAMLG form a heterotetramer which is stabilized by phosphatidylinositol binding and which binds to the GET3 homodimer. Interacts (via C-terminus) with GET1. Interacts (via N-terminus) with GET3. GET3 shows a higher affinity for CAMLG than for GET1. Interacts (via N-terminus) with TNFRSF13B/TACI (via C-terminus). (Microbial infection) Interacts with human herpes virus 8/HHV-8 protein K7; this interaction modulates intracellular calcium concentration. As to expression, ubiquitous. Highest levels in brain, testis and ovary.

The protein resides in the endoplasmic reticulum membrane. Functionally, required for the post-translational delivery of tail-anchored (TA) proteins to the endoplasmic reticulum. Together with GET1/WRB, acts as a membrane receptor for soluble GET3/TRC40, which recognizes and selectively binds the transmembrane domain of TA proteins in the cytosol. Required for the stability of GET1. Stimulates calcium signaling in T cells through its involvement in elevation of intracellular calcium. Essential for the survival of peripheral follicular B cells. This chain is Guided entry of tail-anchored proteins factor CAMLG, found in Homo sapiens (Human).